Consider the following 183-residue polypeptide: Transmembrane and coiled-coil domain-containing protein 2 (183 aa).

Residues 54 to 74 (VQIILGISFLTLLAIGLFALW) traverse the membrane as a helical segment. Positions 127–150 (GLQEKILKKLQMVENKVRDLEGII) form a coiled coil.

The protein resides in the membrane. This chain is Transmembrane and coiled-coil domain-containing protein 2 (Tmco2), found in Mus musculus (Mouse).